We begin with the raw amino-acid sequence, 73 residues long: Translation initiation factor IF-1 3 (73 aa).

In terms of domain architecture, S1-like spans 1 to 72 (MAKEELVEFG…TKGRINYRHK (72 aa)).

It belongs to the IF-1 family. In terms of assembly, component of the 30S ribosomal translation pre-initiation complex which assembles on the 30S ribosome in the order IF-2 and IF-3, IF-1 and N-formylmethionyl-tRNA(fMet); mRNA recruitment can occur at any time during PIC assembly.

The protein resides in the cytoplasm. In terms of biological role, one of the essential components for the initiation of protein synthesis. Stabilizes the binding of IF-2 and IF-3 on the 30S subunit to which N-formylmethionyl-tRNA(fMet) subsequently binds. Helps modulate mRNA selection, yielding the 30S pre-initiation complex (PIC). Upon addition of the 50S ribosomal subunit IF-1, IF-2 and IF-3 are released leaving the mature 70S translation initiation complex. The polypeptide is Translation initiation factor IF-1 3 (Cupriavidus pinatubonensis (strain JMP 134 / LMG 1197) (Cupriavidus necator (strain JMP 134))).